Consider the following 337-residue polypeptide: tRNA N6-adenosine threonylcarbamoyltransferase (337 aa).

2 residues coordinate Fe cation: histidine 111 and histidine 115. Substrate is bound by residues 134–138, aspartate 167, glycine 180, and asparagine 272; that span reads LVSGG. Aspartate 300 serves as a coordination point for Fe cation.

This sequence belongs to the KAE1 / TsaD family. The cofactor is Fe(2+).

Its subcellular location is the cytoplasm. The enzyme catalyses L-threonylcarbamoyladenylate + adenosine(37) in tRNA = N(6)-L-threonylcarbamoyladenosine(37) in tRNA + AMP + H(+). Functionally, required for the formation of a threonylcarbamoyl group on adenosine at position 37 (t(6)A37) in tRNAs that read codons beginning with adenine. Is involved in the transfer of the threonylcarbamoyl moiety of threonylcarbamoyl-AMP (TC-AMP) to the N6 group of A37, together with TsaE and TsaB. TsaD likely plays a direct catalytic role in this reaction. The polypeptide is tRNA N6-adenosine threonylcarbamoyltransferase (Escherichia coli (strain K12 / MC4100 / BW2952)).